Reading from the N-terminus, the 422-residue chain is Synaptotagmin-15 (422 aa).

At M1–Q4 the chain is on the extracellular side. Residues L5–W27 traverse the membrane as a helical; Signal-anchor for type III membrane protein segment. At K28 to P422 the chain is on the cytoplasmic side. C2 domains follow at residues C148–R267 and E279–N400.

Belongs to the synaptotagmin family. As to quaternary structure, homodimer.

It localises to the membrane. May be involved in the trafficking and exocytosis of secretory vesicles in non-neuronal tissues. The chain is Synaptotagmin-15 (Syt15) from Rattus norvegicus (Rat).